The following is a 491-amino-acid chain: Diacylglycerol O-acyltransferase 1 (491 aa).

The disordered stretch occupies residues 1–60 (MGDRGGAGGTRRRRTGSRPSSHGGGGPAAAEEEVRDAAAGPDMGAAGDAPAPAPSKDADD). The Cytoplasmic segment spans residues 1 to 86 (MGDRGGAGGT…SLFSSDSGFN (86 aa)). An involved in homomerization region spans residues 1 to 94 (MGDRGGAGGT…FNNYRGILNW (94 aa)). Residues S20 and S21 each carry the phosphoserine modification. Low complexity predominate over residues 37–50 (AAAGPDMGAAGDAP). The chain crosses the membrane as a helical span at residues 87-121 (NYRGILNWCVVMLILSNARLFLENLIKYGILVDPI). At 122 to 133 (QVVSLFLKDPYS) the chain is on the lumenal side. The extracellular loop 1 (EL1) stretch occupies residues 122–133 (QVVSLFLKDPYS). A helical transmembrane segment spans residues 134-159 (WPAPCLVIAANVFAVAAFQVEKRLAV). An MBOAT fold region spans residues 134–491 (WPAPCLVIAA…LNYEAPVAGA (358 aa)). Residues 160–164 (GALTE) lie on the Cytoplasmic side of the membrane. Residues 165–187 (QAGLLLHVANLATILCFPAAVVL) form a helical membrane-spanning segment. Residues 188 to 194 (LVESITP) lie on the Lumenal side of the membrane. The helical transmembrane segment at 195 to 226 (VGSLLALMVHTILFLKLFSYRDVNLWCRRARA) threads the bilayer. The Cytoplasmic segment spans residues 227 to 276 (KAASAGKRASSAAAPHTVSYPDNLTYRDLYYFLFAPTLCYELNFPRSPRI). The intracellular loop 1 (IL1) stretch occupies residues 227–279 (KAASAGKRASSAAAPHTVSYPDNLTYRDLYYFLFAPTLCYELNFPRSPRIRKR). A helical membrane pass occupies residues 277–311 (RKRFLLRRILEMLFFTQLQVGLIQQWMVPTIQNSM). Residues 312–318 (KPFKDMD) are Lumenal-facing. The helical transmembrane segment at 319-356 (YSRIIERLLKLAVPNHLIWLIFFYWLFHSCLNAVAELM) threads the bilayer. The Cytoplasmic portion of the chain corresponds to 357–402 (QFGDREFYRDWWNSESVTYFWQNWNIPVHKWCIRHFYKPMLRRGSS). The segment at 357-402 (QFGDREFYRDWWNSESVTYFWQNWNIPVHKWCIRHFYKPMLRRGSS) is intracellular loop 2 (IL2). Positions 363-369 (FYRDWWN) match the FYXDWWN motif motif. Residues 377–385 (WQNWNIPVH), Y393, and R407 each bind an acyl-CoA. The segment at 383-397 (PVHKWCIRHFYKPML) is amphipathic helix (AH). A helical membrane pass occupies residues 403 to 423 (RWMARIGVFLASAFFHEYLVS). H418 is a catalytic residue. Residues 424-431 (VPLRMFRL) lie on the Lumenal side of the membrane. Residues 432–450 (WAFTGMMAQIPLAWFVGRF) form a helical membrane-spanning segment. Topologically, residues 451–452 (FQ) are cytoplasmic. A helical transmembrane segment spans residues 453 to 484 (GNYGNAAVWLTLIIGQPIAVLMYVHDYYVLNY). Y480 lines the an acyl-CoA pocket. Residues 485–491 (EAPVAGA) lie on the Lumenal side of the membrane.

It belongs to the membrane-bound acyltransferase family. Sterol o-acyltransferase subfamily. As to quaternary structure, homodimer or homotetramer; both forms have similar enzymatic activities.

It localises to the endoplasmic reticulum membrane. It carries out the reaction an acyl-CoA + a 1,2-diacyl-sn-glycerol = a triacyl-sn-glycerol + CoA. It catalyses the reaction all-trans-retinol + an acyl-CoA = an all-trans-retinyl ester + CoA. The catalysed reaction is 2-(9Z-octadecenoyl)-glycerol + (9Z)-octadecenoyl-CoA = 1,2-di-(9Z-octadecenoyl)-sn-glycerol + CoA. The enzyme catalyses 1,2-di-(9Z-octadecenoyl)-sn-glycerol + (9Z)-octadecenoyl-CoA = 1,2,3-tri-(9Z-octadecenoyl)-glycerol + CoA. It carries out the reaction all-trans-retinol + hexadecanoyl-CoA = all-trans-retinyl hexadecanoate + CoA. It catalyses the reaction 1-O-(9Z-octadecenyl)-glycerol + (9Z)-octadecenoyl-CoA = 1-O-(9Z-octadecyl)-3-(9Z-octadecenoyl)-glycerol + CoA. The catalysed reaction is 1-O-(9Z-octadecyl)-3-(9Z-octadecenoyl)-glycerol + (9Z)-octadecenoyl-CoA = 1-O-(9Z-octadecenyl)-2,3-di-(9Z-octadecenoyl)glycerol + CoA. The enzyme catalyses 1-(9Z-octadecenoyl)-glycerol + (9Z)-octadecenoyl-CoA = 1,2-di-(9Z-octadecenoyl)-glycerol + CoA. It carries out the reaction 1,2-di-(9Z-octadecenoyl)-glycerol + (9Z)-octadecenoate + H(+) = 1,2,3-tri-(9Z-octadecenoyl)-glycerol + H2O. It catalyses the reaction 1-octadecanoyl-2-(5Z,8Z,11Z,14Z-eicosatetraenoyl)-sn-glycerol + (9Z)-octadecenoyl-CoA = 1-octadecanoyl-2-(5Z,8Z,11Z,14Z)-eicosatetraenoyl-3-(9Z)-octadecenoyl-sn-glycerol + CoA. The catalysed reaction is hexadecane-1,2-diol + 2 hexadecanoyl-CoA = 1,2-O,O-dihexadecanoyl-1,2-hexadecanediol + 2 CoA. The enzyme catalyses hexadecane-1,2-diol + hexadecanoyl-CoA = 2-hydroxyhexadecyl hexadecanoate + CoA. It carries out the reaction 2-(9Z-octadecenoyl)-glycerol + hexadecanoyl-CoA = 1-hexadecanoyl-2-(9Z-octadecenoyl)-sn-glycerol + CoA. It catalyses the reaction 1,2-di-(9Z-octadecenoyl)-sn-glycerol + hexadecanoyl-CoA = 1,2-di-(9Z)-octadecenoyl-3-hexadecanoyl-sn-glycerol + CoA. The catalysed reaction is hexadecan-1-ol + hexadecanoyl-CoA = hexadecanyl hexadecanoate + CoA. The enzyme catalyses 13-cis-retinol + hexadecanoyl-CoA = 13-cis-retinyl hexadecanoate + CoA. It carries out the reaction 1,3-di-(9Z-octadecenoyl)-glycerol + (9Z)-octadecenoyl-CoA = 1,2,3-tri-(9Z-octadecenoyl)-glycerol + CoA. It catalyses the reaction 2,3-di-(9Z)-octadecenoyl-sn-glycerol + (9Z)-octadecenoyl-CoA = 1,2,3-tri-(9Z-octadecenoyl)-glycerol + CoA. It participates in lipid metabolism; glycerolipid metabolism. Catalyzes the terminal and only committed step in triacylglycerol synthesis by using diacylglycerol and fatty acyl CoA as substrates. Highly expressed in epithelial cells of the small intestine and its activity is essential for the absorption of dietary fats. In liver, plays a role in esterifying exogenous fatty acids to glycerol, and is required to synthesize fat for storage. Also present in female mammary glands, where it produces fat in the milk. May be involved in VLDL (very low density lipoprotein) assembly. In contrast to DGAT2 it is not essential for survival. Functions as the major acyl-CoA retinol acyltransferase (ARAT) in the skin, where it acts to maintain retinoid homeostasis and prevent retinoid toxicity leading to skin and hair disorders. Exhibits additional acyltransferase activities, includin acyl CoA:monoacylglycerol acyltransferase (MGAT), wax monoester and wax diester synthases. Also able to use 1-monoalkylglycerol (1-MAkG) as an acyl acceptor for the synthesis of monoalkyl-monoacylglycerol (MAMAG). The polypeptide is Diacylglycerol O-acyltransferase 1 (DGAT1) (Chlorocebus aethiops (Green monkey)).